The following is a 539-amino-acid chain: GMP synthase [glutamine-hydrolyzing] (539 aa).

The region spanning 4 to 203 is the Glutamine amidotransferase type-1 domain; that stretch reads KILILDFGSQ…VHDICGCKSD (200 aa). The active-site Nucleophile is Cys82. Residues His177 and Glu179 contribute to the active site. In terms of domain architecture, GMPS ATP-PPase spans 204–395; the sequence is WNMPDYIAEA…LGLPHDMVYR (192 aa). 231-237 is an ATP binding site; that stretch reads SGGVDSS.

Homodimer.

The catalysed reaction is XMP + L-glutamine + ATP + H2O = GMP + L-glutamate + AMP + diphosphate + 2 H(+). It participates in purine metabolism; GMP biosynthesis; GMP from XMP (L-Gln route): step 1/1. Catalyzes the synthesis of GMP from XMP. This is GMP synthase [glutamine-hydrolyzing] from Janthinobacterium sp. (strain Marseille) (Minibacterium massiliensis).